Here is a 165-residue protein sequence, read N- to C-terminus: UPF0763 protein NIS_0363 (165 aa).

This sequence belongs to the UPF0763 family.

The polypeptide is UPF0763 protein NIS_0363 (Nitratiruptor sp. (strain SB155-2)).